The following is a 281-amino-acid chain: MSHGTYYECEPRAGQQPLEFSGARAGPGELGDMCEHEASIDLSAYIESGEEQLLSDLFAVKPAPEARELKGPGTPAFPHYLPADPRPFTYPPHTFGPDRKALGPGIYSSPGSYDPRAVAVKEEPRGPEGSRGASRSGYNPLQYQVAHCGQTAMHLPPGLASPSQPLRVLKAPLAAAAPPCSPLLKAPSPAGPSHKGKKAVNKDSLEYRLRRERNNIAVRKSRDKAKRRILETQQKVLEYMAENERLRSRVEQLTQELDTLRNLFRQIPEAANLIKGVGGCS.

A disordered region spans residues 1–30; the sequence is MSHGTYYECEPRAGQQPLEFSGARAGPGEL. Residue Lys121 forms a Glycyl lysine isopeptide (Lys-Gly) (interchain with G-Cter in SUMO2) linkage. The residue at position 181 (Ser181) is a Phosphoserine. The bZIP domain occupies 204 to 267; sequence SLEYRLRRER…DTLRNLFRQI (64 aa). A basic motif region spans residues 208–228; that stretch reads RLRRERNNIAVRKSRDKAKRR. Residues 230–237 are leucine-zipper; the sequence is LETQQKVL.

This sequence belongs to the bZIP family. C/EBP subfamily. In terms of assembly, binds DNA as a homodimer and as a heterodimer. Can form stable heterodimers with CEBPA, CEBPB and CEBPD. Interacts with GATA1 and SPI1. Interacts with SMARCD2. Phosphorylated.

Its subcellular location is the nucleus. Functionally, transcriptional activator. C/EBP are DNA-binding proteins that recognize two different motifs: the CCAAT homology common to many promoters and the enhanced core homology common to many enhancers. Required for the promyelocyte-myelocyte transition in myeloid differentiation. This Ovis aries (Sheep) protein is CCAAT/enhancer-binding protein epsilon (CEBPE).